The primary structure comprises 137 residues: NADPH-dependent 7-cyano-7-deazaguanine reductase (137 aa).

Cys-50 serves as the catalytic Thioimide intermediate. Residue Asp-57 is the Proton donor of the active site. Substrate-binding positions include 72–74 and 91–92; these read VEL and HE.

This sequence belongs to the GTP cyclohydrolase I family. QueF type 1 subfamily.

Its subcellular location is the cytoplasm. It carries out the reaction 7-aminomethyl-7-carbaguanine + 2 NADP(+) = 7-cyano-7-deazaguanine + 2 NADPH + 3 H(+). It participates in tRNA modification; tRNA-queuosine biosynthesis. In terms of biological role, catalyzes the NADPH-dependent reduction of 7-cyano-7-deazaguanine (preQ0) to 7-aminomethyl-7-deazaguanine (preQ1). This is NADPH-dependent 7-cyano-7-deazaguanine reductase from Synechococcus sp. (strain CC9902).